The chain runs to 347 residues: Globoside alpha-1,3-N-acetylgalactosaminyltransferase 1 (347 aa).

Residues 1–5 (MRCRR) lie on the Cytoplasmic side of the membrane. A helical; Signal-anchor for type II membrane protein membrane pass occupies residues 6–26 (LALGLGFSLLSGIALWSLWIY). The Lumenal segment spans residues 27 to 347 (METWLPFSYV…LDKATSWLRS (321 aa)). An N-linked (GlcNAc...) asparagine glycan is attached at Asn108. Substrate-binding positions include 116 to 121 (FAVGKY), 206 to 208 (DVD), and 228 to 231 (HPGY). Mn(2+) is bound by residues Asp206 and Asp208. The active-site Nucleophile is the Glu298.

Belongs to the glycosyltransferase 6 family. It depends on Mn(2+) as a cofactor.

It is found in the golgi apparatus membrane. The enzyme catalyses a globoside Gb4Cer (d18:1(4E)) + UDP-N-acetyl-alpha-D-galactosamine = a globoside Forssman (d18:1(4E)) + UDP + H(+). It carries out the reaction a globoside Gb4Cer + UDP-N-acetyl-alpha-D-galactosamine = a globoside IV3GalNAc-Gb4Cer + UDP + H(+). It functions in the pathway protein modification; protein glycosylation. Functionally, catalyzes the formation of Forssman glycolipid via the addition of N-acetylgalactosamine (GalNAc) in alpha-1,3-linkage to GalNAcb-1,3Gala-1,4Galb-1,4GlcCer (Gb4Cer). Forssman glycolipid (also called Forssman antigen; FG) probably serves for adherence of some pathogens such as E.coli uropathogenic strains. This chain is Globoside alpha-1,3-N-acetylgalactosaminyltransferase 1, found in Canis lupus familiaris (Dog).